We begin with the raw amino-acid sequence, 421 residues long: UDP-N-acetylglucosamine 1-carboxyvinyltransferase 1 (421 aa).

Phosphoenolpyruvate is bound at residue 22 to 23 (KN). Arg95 contributes to the UDP-N-acetyl-alpha-D-glucosamine binding site. The Proton donor role is filled by Cys119. Cys119 is modified (2-(S-cysteinyl)pyruvic acid O-phosphothioketal). UDP-N-acetyl-alpha-D-glucosamine-binding positions include 124-128 (RPIEQ), Asp308, and Val330.

This sequence belongs to the EPSP synthase family. MurA subfamily.

The protein resides in the cytoplasm. It carries out the reaction phosphoenolpyruvate + UDP-N-acetyl-alpha-D-glucosamine = UDP-N-acetyl-3-O-(1-carboxyvinyl)-alpha-D-glucosamine + phosphate. Its pathway is cell wall biogenesis; peptidoglycan biosynthesis. Its function is as follows. Cell wall formation. Adds enolpyruvyl to UDP-N-acetylglucosamine. The sequence is that of UDP-N-acetylglucosamine 1-carboxyvinyltransferase 1 from Staphylococcus aureus (strain bovine RF122 / ET3-1).